A 42-amino-acid polypeptide reads, in one-letter code: Photosystem II reaction center protein J (42 aa).

Residues 10–30 traverse the membrane as a helical segment; the sequence is IPLWLVLTIIGLAAIALLALF.

The protein belongs to the PsbJ family. As to quaternary structure, PSII is composed of 1 copy each of membrane proteins PsbA, PsbB, PsbC, PsbD, PsbE, PsbF, PsbH, PsbI, PsbJ, PsbK, PsbL, PsbM, PsbT, PsbY, PsbZ, Psb30/Ycf12, at least 3 peripheral proteins of the oxygen-evolving complex and a large number of cofactors. It forms dimeric complexes.

The protein localises to the plastid. It localises to the chloroplast thylakoid membrane. In terms of biological role, this protein is a component of the reaction center of photosystem II. Its function is as follows. One of the components of the core complex of photosystem II (PSII). PSII is a light-driven water:plastoquinone oxidoreductase that uses light energy to abstract electrons from H(2)O, generating O(2) and a proton gradient subsequently used for ATP formation. It consists of a core antenna complex that captures photons, and an electron transfer chain that converts photonic excitation into a charge separation. This Euglena gracilis protein is Photosystem II reaction center protein J.